The primary structure comprises 267 residues: Putative carbamate hydrolase RutD (267 aa).

Residues 23–139 (VVLLSSGLGG…IQRCFDTRIH (117 aa)) enclose the AB hydrolase-1 domain.

The protein belongs to the AB hydrolase superfamily. Hydrolase RutD family.

It catalyses the reaction carbamate + 2 H(+) = NH4(+) + CO2. Involved in pyrimidine catabolism. May facilitate the hydrolysis of carbamate, a reaction that can also occur spontaneously. The chain is Putative carbamate hydrolase RutD from Caulobacter segnis (strain ATCC 21756 / DSM 7131 / JCM 7823 / NBRC 15250 / LMG 17158 / TK0059) (Mycoplana segnis).